Consider the following 435-residue polypeptide: Phosphomethylpyrimidine synthase (435 aa).

Substrate is bound by residues asparagine 67, methionine 96, tyrosine 125, histidine 163, 185–187 (SRG), 226–229 (DGLR), and glutamate 265. Histidine 269 lines the Zn(2+) pocket. Tyrosine 292 is a substrate binding site. Histidine 333 lines the Zn(2+) pocket. [4Fe-4S] cluster-binding residues include cysteine 408, cysteine 411, and cysteine 415.

It belongs to the ThiC family. Requires [4Fe-4S] cluster as cofactor.

It catalyses the reaction 5-amino-1-(5-phospho-beta-D-ribosyl)imidazole + S-adenosyl-L-methionine = 4-amino-2-methyl-5-(phosphooxymethyl)pyrimidine + CO + 5'-deoxyadenosine + formate + L-methionine + 3 H(+). It participates in cofactor biosynthesis; thiamine diphosphate biosynthesis. Its function is as follows. Catalyzes the synthesis of the hydroxymethylpyrimidine phosphate (HMP-P) moiety of thiamine from aminoimidazole ribotide (AIR) in a radical S-adenosyl-L-methionine (SAM)-dependent reaction. This is Phosphomethylpyrimidine synthase from Thermus thermophilus (strain ATCC 27634 / DSM 579 / HB8).